We begin with the raw amino-acid sequence, 431 residues long: Enolase (431 aa).

Gln-167 serves as a coordination point for (2R)-2-phosphoglycerate. The active-site Proton donor is the Glu-209. Residues Asp-246, Glu-290, and Asp-317 each contribute to the Mg(2+) site. The (2R)-2-phosphoglycerate site is built by Lys-342, Arg-371, Ser-372, and Lys-393. Lys-342 serves as the catalytic Proton acceptor.

The protein belongs to the enolase family. Component of the RNA degradosome, a multiprotein complex involved in RNA processing and mRNA degradation. The cofactor is Mg(2+).

Its subcellular location is the cytoplasm. It localises to the secreted. It is found in the cell surface. The catalysed reaction is (2R)-2-phosphoglycerate = phosphoenolpyruvate + H2O. Its pathway is carbohydrate degradation; glycolysis; pyruvate from D-glyceraldehyde 3-phosphate: step 4/5. Functionally, catalyzes the reversible conversion of 2-phosphoglycerate (2-PG) into phosphoenolpyruvate (PEP). It is essential for the degradation of carbohydrates via glycolysis. The protein is Enolase of Yersinia pestis bv. Antiqua (strain Antiqua).